A 188-amino-acid chain; its full sequence is Peptidyl-tRNA hydrolase (188 aa).

Residue Y14 participates in tRNA binding. The active-site Proton acceptor is H19. 3 residues coordinate tRNA: Y64, N66, and N112.

It belongs to the PTH family. As to quaternary structure, monomer.

The protein localises to the cytoplasm. It catalyses the reaction an N-acyl-L-alpha-aminoacyl-tRNA + H2O = an N-acyl-L-amino acid + a tRNA + H(+). Its function is as follows. Hydrolyzes ribosome-free peptidyl-tRNAs (with 1 or more amino acids incorporated), which drop off the ribosome during protein synthesis, or as a result of ribosome stalling. Catalyzes the release of premature peptidyl moieties from peptidyl-tRNA molecules trapped in stalled 50S ribosomal subunits, and thus maintains levels of free tRNAs and 50S ribosomes. Releases Ala-tailed nascent peptides from stalled 50S ribosomal subunits. Non-templated Ala tailing occurs as part of the ribosome quality control (RQC) pathway. In the absence of Ala tails significantly less peptide release occurs. The Ala tail facilitates the interaction of Pth with the nascent peptide-tRNA ester bond as well as promoting nascent chain degradation; 3 Ala residues suffice to stimulate peptide release from stalled 50S ribosomal subunits. Complements a temperature-sensitive pth mutation in E.coli. The chain is Peptidyl-tRNA hydrolase from Bacillus subtilis (strain 168).